Reading from the N-terminus, the 398-residue chain is Alpha-2,8-sialyltransferase 8F (398 aa).

Topologically, residues 1–3 (MRP) are cytoplasmic. A helical; Signal-anchor for type II membrane protein membrane pass occupies residues 4–24 (GGALLALLASLLLLLLLRLLW). Residues 25–398 (CPADAPGRAR…KLQFSKCEVA (374 aa)) are Lumenal-facing. N-linked (GlcNAc...) asparagine glycosylation is found at asparagine 66, asparagine 93, asparagine 151, and asparagine 196. Disulfide bonds link cysteine 186-cysteine 335 and cysteine 200-cysteine 395. Residues asparagine 214, 236–238 (NPS), and 322–324 (STG) contribute to the substrate site. Histidine 370 functions as the Proton donor/acceptor in the catalytic mechanism.

It belongs to the glycosyltransferase 29 family.

The protein resides in the golgi apparatus membrane. The enzyme catalyses a ganglioside GM3 + CMP-N-acetyl-beta-neuraminate = a ganglioside GD3 + CMP + H(+). The catalysed reaction is a ganglioside GM3 (d18:1(4E)) + CMP-N-acetyl-beta-neuraminate = a ganglioside GD3 (d18:1(4E)) + CMP + H(+). It catalyses the reaction a ganglioside GD1a (d18:1(4E)) + CMP-N-acetyl-beta-neuraminate = a ganglioside GT1a (d18:1(4E)) + CMP + H(+). It carries out the reaction a ganglioside GD1a + CMP-N-acetyl-beta-neuraminate = a ganglioside GT1a + CMP + H(+). The enzyme catalyses a ganglioside GM1b (d18:1(4E)) + CMP-N-acetyl-beta-neuraminate = a ganglioside GD1c (d18:1(4E)) + CMP + H(+). The catalysed reaction is a ganglioside GM1b + CMP-N-acetyl-beta-neuraminate = a ganglioside GD1c + CMP + H(+). It catalyses the reaction a ganglioside GM4 (d18:1(4E)) + CMP-N-acetyl-beta-neuraminate = an N-acetyl-alpha-neuraminosyl-(2-&gt;8)-N-acetyl-alpha-neuraminosyl-(2-&gt;3)-beta-D-galactosyl-(1&lt;-&gt;1')-N-acylsphing-4-enine + CMP + H(+). It carries out the reaction N-acetyl-alpha-neuraminosyl-(2-&gt;3)-beta-D-galactosyl-(1&lt;-&gt;1')-ceramide + CMP-N-acetyl-beta-neuraminate = N-acetyl-alpha-neuraminosyl-(2-&gt;8)-N-acetyl-alpha-neuraminosyl-(2-&gt;3)-beta-D-galactosyl-(1&lt;-&gt;1')-ceramide + CMP + H(+). The enzyme catalyses a ganglioside GT1b (d18:1(4E)) + CMP-N-acetyl-beta-neuraminate = a ganglioside GQ1b (d18:1(4E)) + CMP + H(+). The catalysed reaction is a ganglioside GT1b + CMP-N-acetyl-beta-neuraminate = a ganglioside GQ1b + CMP + H(+). It participates in protein modification; protein glycosylation. Its function is as follows. Alpha-2,8-sialyltransferase that prefers O-glycans to N-glycans or glycolipids as acceptor substrates. The minimal acceptor substrate is the NeuAc-alpha-2,3(6)-Gal sequence at the non-reducing end of their carbohydrate groups. This chain is Alpha-2,8-sialyltransferase 8F (ST8SIA6), found in Pan troglodytes (Chimpanzee).